Here is a 454-residue protein sequence, read N- to C-terminus: Ribosomal protein uS12 methylthiotransferase RimO (454 aa).

The MTTase N-terminal domain occupies 14–125 (SKVAFSHVGC…IAKVLDRVEK (112 aa)). [4Fe-4S] cluster is bound by residues C23, C59, C88, C163, C167, and C170. A Radical SAM core domain is found at 149 to 378 (DKNKFVAYLR…ISVQQNISKD (230 aa)). The TRAM domain occupies 381 to 452 (QSYVGSKMKI…EYDLYGETIK (72 aa)).

Belongs to the methylthiotransferase family. RimO subfamily. Requires [4Fe-4S] cluster as cofactor.

Its subcellular location is the cytoplasm. The catalysed reaction is L-aspartate(89)-[ribosomal protein uS12]-hydrogen + (sulfur carrier)-SH + AH2 + 2 S-adenosyl-L-methionine = 3-methylsulfanyl-L-aspartate(89)-[ribosomal protein uS12]-hydrogen + (sulfur carrier)-H + 5'-deoxyadenosine + L-methionine + A + S-adenosyl-L-homocysteine + 2 H(+). Functionally, catalyzes the methylthiolation of an aspartic acid residue of ribosomal protein uS12. The chain is Ribosomal protein uS12 methylthiotransferase RimO from Prochlorococcus marinus (strain MIT 9312).